The following is a 383-amino-acid chain: Na(+)/H(+) antiporter NhaA (383 aa).

The next 11 helical transmembrane spans lie at 21–41 (AAGV…NSIW), 56–76 (LTMR…LAGL), 94–114 (LLPG…YVAF), 123–143 (GWAI…ALAG), 152–172 (VFLT…IALF), 175–195 (GTLS…LLML), 202–222 (TLFP…KSGI), 258–278 (FVIL…GVTV), 287–307 (LGVG…AVSI), 326–346 (IGIA…AILA), and 355–375 (QIKL…YILL).

The protein belongs to the NhaA Na(+)/H(+) (TC 2.A.33) antiporter family.

Its subcellular location is the cell inner membrane. It carries out the reaction Na(+)(in) + 2 H(+)(out) = Na(+)(out) + 2 H(+)(in). Na(+)/H(+) antiporter that extrudes sodium in exchange for external protons. This chain is Na(+)/H(+) antiporter NhaA, found in Granulibacter bethesdensis (strain ATCC BAA-1260 / CGDNIH1).